Reading from the N-terminus, the 956-residue chain is Translation initiation factor IF-2 (956 aa).

Residues 68 to 357 (APEAAAPKAP…GVSVPRGDGN (290 aa)) form a disordered region. Composition is skewed to low complexity over residues 86-123 (AKPA…APAV), 141-156 (PGNN…PRAG), 164-175 (PAAAPASGAGRP), and 212-235 (GPRP…RPAA). Composition is skewed to gly residues over residues 236-257 (GSGG…GGGN) and 276-324 (RGAG…GAGR). Residues 325–334 (GKQRKSKRAK) are compositionally biased toward basic residues. Residues 449–620 (ARPPVVTVMG…AVMLTADAAL (172 aa)) enclose the tr-type G domain. Positions 458–465 (GHVDHGKT) are G1. Residue 458–465 (GHVDHGKT) coordinates GTP. The interval 483-487 (GITQH) is G2. The G3 stretch occupies residues 508–511 (DTPG). GTP contacts are provided by residues 508-512 (DTPGH) and 562-565 (NKID). Residues 562–565 (NKID) form a G4 region. Positions 598 to 600 (SAR) are G5.

It belongs to the TRAFAC class translation factor GTPase superfamily. Classic translation factor GTPase family. IF-2 subfamily.

The protein resides in the cytoplasm. Its function is as follows. One of the essential components for the initiation of protein synthesis. Protects formylmethionyl-tRNA from spontaneous hydrolysis and promotes its binding to the 30S ribosomal subunits. Also involved in the hydrolysis of GTP during the formation of the 70S ribosomal complex. This is Translation initiation factor IF-2 from Renibacterium salmoninarum (strain ATCC 33209 / DSM 20767 / JCM 11484 / NBRC 15589 / NCIMB 2235).